Reading from the N-terminus, the 594-residue chain is Elongation factor 4 (594 aa).

The tr-type G domain maps to 2-184 (KNIRNFSIIA…TIVAKVPAPE (183 aa)). Residues 14–19 (DHGKST) and 131–134 (NKID) each bind GTP.

Belongs to the TRAFAC class translation factor GTPase superfamily. Classic translation factor GTPase family. LepA subfamily.

It is found in the cell inner membrane. It carries out the reaction GTP + H2O = GDP + phosphate + H(+). Required for accurate and efficient protein synthesis under certain stress conditions. May act as a fidelity factor of the translation reaction, by catalyzing a one-codon backward translocation of tRNAs on improperly translocated ribosomes. Back-translocation proceeds from a post-translocation (POST) complex to a pre-translocation (PRE) complex, thus giving elongation factor G a second chance to translocate the tRNAs correctly. Binds to ribosomes in a GTP-dependent manner. The polypeptide is Elongation factor 4 (Francisella tularensis subsp. holarctica (strain FTNF002-00 / FTA)).